Here is a 290-residue protein sequence, read N- to C-terminus: Cilia- and flagella-associated protein 298 (290 aa).

Tyr264 carries the phosphotyrosine modification.

This sequence belongs to the CFAP298 family. Interacts with ZMYND10.

The protein localises to the cytoplasm. The protein resides in the cytoskeleton. It localises to the cilium basal body. Functionally, plays a role in motile cilium function, possibly by acting on outer dynein arm assembly. Seems to be important for initiation rather than maintenance of cilium motility. Required for correct positioning of the cilium at the apical cell surface, suggesting an additional role in the planar cell polarity (PCP) pathway. May suppress canonical Wnt signaling activity. This chain is Cilia- and flagella-associated protein 298, found in Homo sapiens (Human).